The following is a 562-amino-acid chain: Protein TBF1 (562 aa).

The segment at alanine 376–lysine 414 is disordered. Low complexity predominate over residues serine 377–serine 400. Positions arginine 404–alanine 460 constitute an HTH myb-type domain. A DNA-binding region (H-T-H motif) is located at residues tryptophan 431–leucine 456. A disordered region spans residues phenylalanine 495–methionine 562. Composition is skewed to polar residues over residues serine 496–aspartate 522 and glycine 532–threonine 552.

As to quaternary structure, homodimer.

It localises to the nucleus. Its subcellular location is the chromosome. The protein resides in the telomere. Its function is as follows. Binds the telomeric double-stranded TTAGGG repeat and negatively regulates telomere length. Involved in the regulation of gene expression. 52 binding sites have been identified, distributed over 15 chromosomes. A member of the general regulatory factors (GRFs) which act as genome partitioners. Acts as a chromatin insulator which are known as STARs (Subtelomeric anti-silencing region). STARs prevent negative or positive transcription influence by extending across chromatin to a promoter. The sequence is that of Protein TBF1 (TBF1) from Saccharomyces cerevisiae (strain ATCC 204508 / S288c) (Baker's yeast).